Here is a 201-residue protein sequence, read N- to C-terminus: Musculin (201 aa).

Disordered regions lie at residues 1 to 108 and 182 to 201; these read MSTG…NAAN and RPDSDSKDVSAANRLCGTSA. A compositionally biased stretch (acidic residues) spans 46–56; it reads SAEEEDGEEEP. The short motif at 66-71 is the Nuclear localization signal element; sequence KRKRLR. The segment covering 74 to 86 has biased composition (gly residues); that stretch reads DAGGAGGRAGGAG. The region spanning 102 to 154 is the bHLH domain; sequence SQRNAANARERARMRVLSKAFSRLKTSLPWVPPDTKLSKLDTLRLASSYIAHL.

In terms of assembly, efficient DNA binding requires dimerization with another bHLH protein. Binds DNA as a homodimer or a heterodimer. Forms a heterodimer with TCF3.

Its subcellular location is the nucleus. Transcription repressor that blocks myogenesis and activation of E-box dependent muscle genes. This is Musculin (Msc) from Mus musculus (Mouse).